We begin with the raw amino-acid sequence, 101 residues long: Small ribosomal subunit protein uS14 (101 aa).

This sequence belongs to the universal ribosomal protein uS14 family. In terms of assembly, part of the 30S ribosomal subunit. Contacts proteins S3 and S10.

Binds 16S rRNA, required for the assembly of 30S particles and may also be responsible for determining the conformation of the 16S rRNA at the A site. The protein is Small ribosomal subunit protein uS14 of Actinobacillus pleuropneumoniae serotype 5b (strain L20).